A 198-amino-acid chain; its full sequence is Glycerol-3-phosphate acyltransferase (198 aa).

Transmembrane regions (helical) follow at residues 6–26 (MLPV…GLIL), 56–78 (LAAA…AGYL), 83–101 (AAML…PVWL), 113–133 (IGIL…VWLA), and 154–174 (IVLW…LTLL).

It belongs to the PlsY family. In terms of assembly, probably interacts with PlsX.

The protein localises to the cell inner membrane. The enzyme catalyses an acyl phosphate + sn-glycerol 3-phosphate = a 1-acyl-sn-glycero-3-phosphate + phosphate. The protein operates within lipid metabolism; phospholipid metabolism. Catalyzes the transfer of an acyl group from acyl-phosphate (acyl-PO(4)) to glycerol-3-phosphate (G3P) to form lysophosphatidic acid (LPA). This enzyme utilizes acyl-phosphate as fatty acyl donor, but not acyl-CoA or acyl-ACP. This Bradyrhizobium sp. (strain ORS 278) protein is Glycerol-3-phosphate acyltransferase.